A 284-amino-acid chain; its full sequence is Aquaporin NIP1-1 (284 aa).

The segment covering 1-12 (MAGGDNNSQTTN) has biased composition (polar residues). The segment at 1–28 (MAGGDNNSQTTNGGSGHEQRAMEEGRKQ) is disordered. A compositionally biased stretch (basic and acidic residues) spans 17–28 (HEQRAMEEGRKQ). 2 consecutive transmembrane segments (helical) span residues 50–70 (IIAE…AVTI) and 78–98 (ITFP…VYAV). Residues 107–109 (NPA) carry the NPA 1 motif. 3 consecutive transmembrane segments (helical) span residues 129–149 (AAAQ…MFGG), 166–186 (SLVL…GVAT), and 194–214 (LAGL…GPIS). The short motif at 219-221 (NPA) is the NPA 2 element. A helical membrane pass occupies residues 236–256 (IWVYIVGPVAGAVAGAWAYNI).

This sequence belongs to the MIP/aquaporin (TC 1.A.8) family. NIP (TC 1.A.8.12) subfamily. In terms of tissue distribution, expressed in leaves and at lower levels in roots and anthers.

The protein resides in the membrane. Functionally, aquaporins facilitate the transport of water and small neutral solutes across cell membranes. This is Aquaporin NIP1-1 (NIP1-1) from Oryza sativa subsp. japonica (Rice).